The primary structure comprises 221 residues: Response regulator protein PmrA (221 aa).

In terms of domain architecture, Response regulatory spans 2-116 (RILLAEDDLL…ELQARVRALT (115 aa)). At aspartate 51 the chain carries 4-aspartylphosphate. A DNA-binding region (ompR/PhoB-type) is located at residues 124 to 218 (LPQLVHGELR…VRGIGYGIDQ (95 aa)).

The protein localises to the cytoplasm. Member of the two-component regulatory system PmrA/PmrB that plays a role in the regulation of resistance towards polymyxin B and cationic antimicrobial peptides in response to limiting concentrations of Mg(2+). Functions as a transcriptional activator by direct binding to a cis-acting sequence upstream of the target gene promoters including lipase lipA and pmrH promoters. Also autoregulates its own pmrAB operon under Mg(2+)-limiting conditions. This is Response regulator protein PmrA (pmrA) from Pseudomonas aeruginosa (strain ATCC 15692 / DSM 22644 / CIP 104116 / JCM 14847 / LMG 12228 / 1C / PRS 101 / PAO1).